The sequence spans 312 residues: DNA-directed RNA polymerase subunit alpha (312 aa).

The segment at 1–226 (MIEFEKPNIT…EHFKVFMSTD (226 aa)) is alpha N-terminal domain (alpha-NTD). An alpha C-terminal domain (alpha-CTD) region spans residues 243–312 (NEKKLEMTIE…ELGLSLRQDD (70 aa)).

It belongs to the RNA polymerase alpha chain family. Homodimer. The RNAP catalytic core consists of 2 alpha, 1 beta, 1 beta' and 1 omega subunit. When a sigma factor is associated with the core the holoenzyme is formed, which can initiate transcription.

The catalysed reaction is RNA(n) + a ribonucleoside 5'-triphosphate = RNA(n+1) + diphosphate. In terms of biological role, DNA-dependent RNA polymerase catalyzes the transcription of DNA into RNA using the four ribonucleoside triphosphates as substrates. The sequence is that of DNA-directed RNA polymerase subunit alpha from Lactobacillus gasseri (strain ATCC 33323 / DSM 20243 / BCRC 14619 / CIP 102991 / JCM 1131 / KCTC 3163 / NCIMB 11718 / NCTC 13722 / AM63).